The chain runs to 295 residues: MTSTINRPLDGEGSVQVKQDPKINIEEGALVIAVYGKGGIGKSTTSSNLSAAFSKLGKKVLQIGCDPKHDSTFTLTHKMVPTVIDILEEVDFHSEELRPTDFMFEGFNGVMCVESGGPPAGTGCGGYVTGQTVKLLKEHHLLEDTDVVIFDVLGDVVCGGFAAPLQHANYCLIVTANDFDSIFAMNRIVSAIKAKAKNYKVRLGGVVANRSKDTDQIDKFNERTGLKTMAHFKDVDAIRRSRLKKCTIFEMEPTEDVIEVQNEYLSLAKNMLEKVEPLEGNPLKDREIFDLLGFD.

ATP contacts are provided by residues 39 to 44 and lysine 68; that span reads GIGKST. Residue serine 43 participates in Mg(2+) binding. [4Fe-4S] cluster is bound by residues cysteine 124 and cysteine 158. Residue 209–210 participates in ATP binding; the sequence is NR.

This sequence belongs to the NifH/BchL/ChlL family. Homodimer. Protochlorophyllide reductase is composed of three subunits; ChlL, ChlN and ChlB. The cofactor is [4Fe-4S] cluster.

The catalysed reaction is chlorophyllide a + oxidized 2[4Fe-4S]-[ferredoxin] + 2 ADP + 2 phosphate = protochlorophyllide a + reduced 2[4Fe-4S]-[ferredoxin] + 2 ATP + 2 H2O. Its pathway is porphyrin-containing compound metabolism; chlorophyll biosynthesis (light-independent). Component of the dark-operative protochlorophyllide reductase (DPOR) that uses Mg-ATP and reduced ferredoxin to reduce ring D of protochlorophyllide (Pchlide) to form chlorophyllide a (Chlide). This reaction is light-independent. The L component serves as a unique electron donor to the NB-component of the complex, and binds Mg-ATP. The polypeptide is Light-independent protochlorophyllide reductase iron-sulfur ATP-binding protein (Prochlorococcus marinus (strain MIT 9301)).